Reading from the N-terminus, the 166-residue chain is Large ribosomal subunit protein uL10 (166 aa).

The protein belongs to the universal ribosomal protein uL10 family. As to quaternary structure, part of the ribosomal stalk of the 50S ribosomal subunit. The N-terminus interacts with L11 and the large rRNA to form the base of the stalk. The C-terminus forms an elongated spine to which L12 dimers bind in a sequential fashion forming a multimeric L10(L12)X complex.

Functionally, forms part of the ribosomal stalk, playing a central role in the interaction of the ribosome with GTP-bound translation factors. The chain is Large ribosomal subunit protein uL10 from Mesoplasma florum (strain ATCC 33453 / NBRC 100688 / NCTC 11704 / L1) (Acholeplasma florum).